A 274-amino-acid polypeptide reads, in one-letter code: Penicillin-insensitive murein endopeptidase (274 aa).

The signal sequence occupies residues 1-19 (MKKTAIALLAWFVSSASLA). 3 cysteine pairs are disulfide-bonded: Cys44–Cys265, Cys187–Cys235, and Cys216–Cys223. His110, His113, Asp120, Asp147, His150, and His211 together coordinate Zn(2+). A disordered region spans residues 225-274 (DQPLPPPGDGCGAELQSWFEPPKPGTTKPEKKTPPPLPPSCQALLDEHVL).

This sequence belongs to the peptidase M74 family. In terms of assembly, dimer. The cofactor is Zn(2+).

The protein resides in the periplasm. Its function is as follows. Murein endopeptidase that cleaves the D-alanyl-meso-2,6-diamino-pimelyl amide bond that connects peptidoglycan strands. Likely plays a role in the removal of murein from the sacculus. This chain is Penicillin-insensitive murein endopeptidase, found in Salmonella choleraesuis (strain SC-B67).